Reading from the N-terminus, the 165-residue chain is Phosphopantetheine adenylyltransferase (165 aa).

Position 10 (Ser10) interacts with substrate. Residues 10–11 and His18 contribute to the ATP site; that span reads SF. Substrate is bound by residues Lys42, Leu74, and Arg88. ATP contacts are provided by residues 89–91, Glu99, and 124–130; these read GLR and WFYTSST.

It belongs to the bacterial CoaD family. In terms of assembly, homohexamer. Mg(2+) is required as a cofactor.

It is found in the cytoplasm. The catalysed reaction is (R)-4'-phosphopantetheine + ATP + H(+) = 3'-dephospho-CoA + diphosphate. It functions in the pathway cofactor biosynthesis; coenzyme A biosynthesis; CoA from (R)-pantothenate: step 4/5. Its function is as follows. Reversibly transfers an adenylyl group from ATP to 4'-phosphopantetheine, yielding dephospho-CoA (dPCoA) and pyrophosphate. This Syntrophus aciditrophicus (strain SB) protein is Phosphopantetheine adenylyltransferase.